Reading from the N-terminus, the 274-residue chain is 2-dehydro-3-deoxyphosphooctonate aldolase (274 aa).

This sequence belongs to the KdsA family.

The protein localises to the cytoplasm. The catalysed reaction is D-arabinose 5-phosphate + phosphoenolpyruvate + H2O = 3-deoxy-alpha-D-manno-2-octulosonate-8-phosphate + phosphate. The protein operates within carbohydrate biosynthesis; 3-deoxy-D-manno-octulosonate biosynthesis; 3-deoxy-D-manno-octulosonate from D-ribulose 5-phosphate: step 2/3. It functions in the pathway bacterial outer membrane biogenesis; lipopolysaccharide biosynthesis. This is 2-dehydro-3-deoxyphosphooctonate aldolase from Rickettsia peacockii (strain Rustic).